Here is a 558-residue protein sequence, read N- to C-terminus: Potassium-transporting ATPase potassium-binding subunit (558 aa).

Helical transmembrane passes span 1 to 21, 60 to 80, 129 to 149, 169 to 189, 246 to 266, 281 to 301, 326 to 346, 353 to 373, 376 to 396, 415 to 435, 485 to 505, and 523 to 543; these read MSIV…SRYL, IKHF…LLLI, VITF…IAML, FIVR…ISQG, WSNY…VFLF, IMIF…CLYF, FGIG…TGTV, LTPL…VFGG, VGLM…SLMI, IALS…LAFI, IVML…VSSL, and LFFS…TFLP.

The protein belongs to the KdpA family. As to quaternary structure, the system is composed of three essential subunits: KdpA, KdpB and KdpC.

It is found in the cell membrane. Part of the high-affinity ATP-driven potassium transport (or Kdp) system, which catalyzes the hydrolysis of ATP coupled with the electrogenic transport of potassium into the cytoplasm. This subunit binds the extracellular potassium ions and delivers the ions to the membrane domain of KdpB through an intramembrane tunnel. The sequence is that of Potassium-transporting ATPase potassium-binding subunit from Staphylococcus haemolyticus (strain JCSC1435).